A 610-amino-acid chain; its full sequence is Transcription termination factor Rho (610 aa).

The disordered stretch occupies residues 117–227 (EVSRRERRGA…GDGAEAELRQ (111 aa)). Residues 118-131 (VSRRERRGASREAD) are compositionally biased toward basic and acidic residues. Residues 178 to 187 (GVEQQSSSLQ) are compositionally biased toward polar residues. A compositionally biased stretch (basic and acidic residues) spans 189-198 (RGDDDGEGRQ). The span at 199–214 (GRRGRRFRDRDRRRRG) shows a compositional bias: basic residues. Positions 215-227 (ERSGDGAEAELRQ) are enriched in basic and acidic residues. The Rho RNA-BD domain maps to 231–309 (VQPVAGILDV…VRLDSINGGS (79 aa)). ATP contacts are provided by residues 352-357 (GKGQRA), 364-369 (KAGKTT), and R395.

The protein belongs to the Rho family. As to quaternary structure, homohexamer. The homohexamer assembles into an open ring structure.

Its function is as follows. Facilitates transcription termination by a mechanism that involves Rho binding to the nascent RNA, activation of Rho's RNA-dependent ATPase activity, and release of the mRNA from the DNA template. The polypeptide is Transcription termination factor Rho (Mycobacterium leprae (strain TN)).